The chain runs to 373 residues: 3-isopropylmalate dehydrogenase gloI (373 aa).

Residues serine 92, arginine 98, and arginine 108 each coordinate substrate. Mg(2+)-binding residues include aspartate 228, aspartate 253, and aspartate 257. NADP(+) is bound by residues histidine 294–isoleucine 300 and asparagine 307.

Belongs to the isocitrate and isopropylmalate dehydrogenases family. As to quaternary structure, homodimer. The cofactor is Mg(2+). Mn(2+) serves as cofactor.

The catalysed reaction is (2R,3S)-3-isopropylmalate + NAD(+) = 4-methyl-2-oxopentanoate + CO2 + NADH. It participates in mycotoxin biosynthesis. Its function is as follows. 3-isopropylmalate dehydrogenase; part of the gene cluster that mediates the biosynthesis of pneumocandins, lipohexapeptides of the echinocandin family that prevent fungal cell wall formation by non-competitive inhibition of beta-1,3-glucan synthase. The 10,12-dimethylmyristoyl side chain is synthesized by the reducing polyketide synthase gloL/GLPKS4. The thioesterase gloN/GLHYD exclusively interacts with gloL/GLPKS4 to maintain turnover of the polyketide side chain. The 10R,12S-dimethylmyristic acid is then transferred to the first thiolation domain of the nonribosomal peptide synthetase gloA/GLNRPS4 by the acyl-AMP ligase gloD/GLligase, followed by its acylation to L-ornithine to trigger elongation of the cyclic hexapeptide. L-ornithine, 4R-hydroxyl-L-proline (generated from L-proline by the dioxygenase gloF/GLOXY2), 3S-hydroxyl-L-homotyrosine (generated by gloG/GLHtyB, gloH/GLHtyA, gloI/GLHtyC, gloJ/GLHtyD and hydroxylated at C-3 by the dioxygenase gloM/GLOXY1), 3R-hydroxyl-L-glutamine (generated from L-glutamine probably by the dioxygenase gloE/GLOXY3) and 3S-hydroxyl-L-proline (generated from L-proline by the dioxygenase gloF/GLOXY2 to yield pneumocandin B0), or 3S-hydroxyl-4S-methyl-L-proline (generated from L-leucine by the dioxygenase gloC/GLOXY4 to yield pneumocandin A0) are sequentially added to the growing chain. The last C domain of gloA/GLNRPS4 is proposed to be responsible for cyclization by condensation to form the peptide bond between L-ornithine and 3S-hydroxyl-4S-methyl-L-proline (for pneumocandin A0) or 3S-hydroxyl-L-proline (for pneumocandin B0). Finally, the subsequent C-4 hydroxylation of 3S-hydroxyl-L-homotyrosine and L-ornithine dihydroxylation at C-4 and C-5 are performed by the cytochrome P450 monooxygenases gloP/GLP450-1 and gloO/GLP450-2, respectively. This chain is 3-isopropylmalate dehydrogenase gloI, found in Glarea lozoyensis (strain ATCC 20868 / MF5171).